We begin with the raw amino-acid sequence, 388 residues long: Chorismate synthase (388 aa).

Arg-39 and Arg-45 together coordinate NADP(+). FMN contacts are provided by residues 132 to 134, 251 to 252, Gly-296, 311 to 315, and Arg-337; these read RSS, NA, and KPIPT.

Belongs to the chorismate synthase family. Homotetramer. It depends on FMNH2 as a cofactor.

It catalyses the reaction 5-O-(1-carboxyvinyl)-3-phosphoshikimate = chorismate + phosphate. The protein operates within metabolic intermediate biosynthesis; chorismate biosynthesis; chorismate from D-erythrose 4-phosphate and phosphoenolpyruvate: step 7/7. Its function is as follows. Catalyzes the anti-1,4-elimination of the C-3 phosphate and the C-6 proR hydrogen from 5-enolpyruvylshikimate-3-phosphate (EPSP) to yield chorismate, which is the branch point compound that serves as the starting substrate for the three terminal pathways of aromatic amino acid biosynthesis. This reaction introduces a second double bond into the aromatic ring system. This chain is Chorismate synthase, found in Staphylococcus aureus (strain COL).